The sequence spans 1024 residues: MERRSRRKSRRNGRSTAGKAAATQPAKSPGAQLWLFPSAAGLHRALLRRVEVTRQLCCSPGRLAVLERGGAGVQVHQLLAGSGGARTPKCIKLGKNMKIHSVDQGAEHMLILSSDGKPFEYDNYSMKHLRFESILQEKKIIQITCGDYHSLALSKGGELFAWGQNLHGQLGVGRKFPSTTTPQIVEHLAGVPLAQISAGEAHSMALSMSGNIYSWGKNECGQLGLGHTESKDDPSLIEGLDNQKVEFVACGGSHSALLTQDGLLFTFGAGKHGQLGHNSTQNELRPCLVAELVGYRVTQIACGRWHTLAYVSDLGKVFSFGSGKDGQLGNGGTRDQLMPLPVKVSSSEELKLESHTSEKELIMIAGGNQSILLWIKKENSYVNLKRTIPTLNEGTVKRWIADVETKRWQSTKREIQEIFSSPACLTGSFLRKRRTTEMMPVYLDLNKARNIFKELTQKDWITNMITTCLKDNLLKRLPFHSPPQEALEIFFLLPECPMMHISNNWESLVVPFAKVVCKMSDQSSLVLEEYWATLQESTFSKLVQMFKTAVICQLDYWDESAEENGNVQALLEMLKKLHRVNQVKCQLPESIFQVDELLHRLNFFVEVCRRYLWKMTVDASENVQCCVIFSHFPFIFNNLSKIKLLHTDTLLKIESKKHKAYLRSAAIEEERESEFALRPTFDLTVRRNHLIEDVLNQLSQFENEDLRKELWVSFSGEIGYDLGGVKKEFFYCLFAEMIQPEYGMFMYPEGASCMWFPVKPKFEKKRYFFFGVLCGLSLFNCNVANLPFPLALFKKLLDQMPSLEDLKELSPDLGKNLQTLLDDEGDNFEEVFYIHFNVHWDRNDTNLIPNGSSITVNQTNKRDYVSKYINYIFNDSVKAVYEEFRRGFYKMCDEDIIKLFHPEELKDVIVGNTDYDWKTFEKNARYEPGYNSSHPTIVMFWKAFHKLTLEEKKKFLVFLTGTDRLQMKDLNNMKITFCCPESWNERDPIRALTCFSVLFLPKYSTMETVEEALQEAINNNRGFG.

Basic residues predominate over residues 1-13 (MERRSRRKSRRNG). The disordered stretch occupies residues 1–28 (MERRSRRKSRRNGRSTAGKAAATQPAKS). 5 RCC1 repeats span residues 96 to 155 (NMKI…ALSK), 156 to 208 (GGEL…ALSM), 209 to 260 (SGNI…LLTQ), 262 to 312 (GLLF…AYVS), and 314 to 364 (LGKV…LIMI). An HECT domain is found at 702–1024 (ENEDLRKELW…EAINNNRGFG (323 aa)). Cys994 serves as the catalytic Glycyl thioester intermediate.

(Microbial infection) Interacts with human cytomegalovirus protein UL26; this interaction inhibits global protein ISGylation. As to quaternary structure, (Microbial infection) Interacts with Kaposi's sarcoma-associated herpesvirus protein v-IRF1; this interaction inhibits global protein ISGylation. In terms of assembly, binds to CCNA1, CCNB1, CCND1 and CCNE1. Interacts with UBE2L6. Interacts with IRF3, this interaction is marginal in resting cells but enhanced upon viral infection. Interacts with influenza A virus NS1. Post-translationally, ISGylated. In terms of tissue distribution, expressed in testis and to a lesser degree in brain, ovary and placenta. Found in most tissues at low levels.

The protein resides in the cytoplasm. Its subcellular location is the perinuclear region. In terms of biological role, major E3 ligase for ISG15 conjugation. Acts as a positive regulator of innate antiviral response in cells induced by interferon. Functions as part of the ISGylation machinery that recognizes target proteins in a broad and relatively non-specific manner. Catalyzes ISGylation of IRF3 which results in sustained activation, it attenuates IRF3-PIN1 interaction, which antagonizes IRF3 ubiquitination and degradation, and boosts the antiviral response. Mediates ISGylation of the phosphatase PTEN leading to its degradation, thus alleviating its suppression of the PI3K-AKT signaling pathway and promoting the production of cytokines that facilitate bacterial clearance. Interferes with the function of key viral structural proteins such as ebolavirus structural protein VP40 or HIV-1 protein GAG. Catalyzes ISGylation of influenza A viral NS1 which attenuates virulence; ISGylated NS1 fails to form homodimers and thus to interact with its RNA targets. Catalyzes ISGylation of papillomavirus type 16 L1 protein which results in dominant-negative effect on virus infectivity. Physically associated with polyribosomes, broadly modifies newly synthesized proteins in a cotranslational manner. In an interferon-stimulated cell, newly translated viral proteins are primary targets of ISG15. Promotes parkin/PRKN ubiquitin E3 ligase activity by suppressing the intramolecular interaction that maintains its autoinhibited conformation. (Microbial infection) Functions as an E3 ligase for ISGylation of hepatitis B virus protein X leading to enhanced viral replication due to increased interferon resistance. The polypeptide is E3 ISG15--protein ligase HERC5 (HERC5) (Homo sapiens (Human)).